The primary structure comprises 356 residues: Alanine racemase (356 aa).

Catalysis depends on Lys-35, which acts as the Proton acceptor; specific for D-alanine. N6-(pyridoxal phosphate)lysine is present on Lys-35. Arg-130 contacts substrate. The Proton acceptor; specific for L-alanine role is filled by Tyr-253. Met-301 provides a ligand contact to substrate.

Belongs to the alanine racemase family. The cofactor is pyridoxal 5'-phosphate.

It carries out the reaction L-alanine = D-alanine. It participates in amino-acid biosynthesis; D-alanine biosynthesis; D-alanine from L-alanine: step 1/1. Its function is as follows. Catalyzes the interconversion of L-alanine and D-alanine. May also act on other amino acids. The chain is Alanine racemase (alr) from Sodalis glossinidius (strain morsitans).